We begin with the raw amino-acid sequence, 284 residues long: Protein SIC1 (284 aa).

Positions 1–89 (MTPSTPPRSR…SPFPKSSVKR (89 aa)) are disordered. Phosphothreonine; by PHO85 is present on T5. Composition is skewed to polar residues over residues 18 to 52 (PSGNTSSSALMQGQKTPQKPSQNLVPVTPSTTKSF) and 61 to 79 (PNSNMGMTSPFNGLTSPQR). The residue at position 33 (T33) is a Phosphothreonine. A Phosphoserine modification is found at S76. Residue T173 is modified to Phosphothreonine. Residues S198 and S201 each carry the phosphoserine modification. 3 positions are modified to lysine derivative: K268, K272, and K274.

In terms of assembly, interacts with HOG1. Phosphorylated by cyclin-dependent kinases CDC28 and PHO85 in association with G1-cyclins, promoting degradation of SIC1 and exit form G1. Post-translationally, may contain a covalently attached chromophore. In terms of processing, the N-terminus is blocked.

Its subcellular location is the cytoplasm. The protein resides in the nucleus. Substrate and inhibitor of the cyclin-dependent protein kinase CDC28. Its activity could be important for faithful segregation of chromosomes to daughter cells. It acts in response to a signal from a post-start checkpoint. This chain is Protein SIC1 (SIC1), found in Saccharomyces cerevisiae (strain ATCC 204508 / S288c) (Baker's yeast).